The chain runs to 122 residues: Prefoldin subunit 1 (122 aa).

Ala-2 is modified (N-acetylalanine).

This sequence belongs to the prefoldin subunit beta family. In terms of assembly, heterohexamer of two PFD-alpha type and four PFD-beta type subunits.

Its function is as follows. Binds specifically to cytosolic chaperonin (c-CPN) and transfers target proteins to it. Binds to nascent polypeptide chain and promotes folding in an environment in which there are many competing pathways for nonnative proteins. This Mus musculus (Mouse) protein is Prefoldin subunit 1 (Pfdn1).